A 192-amino-acid chain; its full sequence is MAQMYFYYSAMNAGKSTTLLQSSFNYQERGMTPVIFTAALDDRYGIGKVSSRIGLQAEAQLFKADTNLYQEIAALNEVEKRHCILVDECQFLSKEQVYQLTEVVDKLHIPVLCYGLRTDFLGELFEGSKYLLSWADKLVELKTICHCGRKANMVIRTDEHGKAIKEGDQVAIGGNDRYVSVCRQHYKEALGK.

ATP-binding positions include 9-16 and 87-90; these read SAMNAGKS and DECQ. Residue Glu88 is the Proton acceptor of the active site. Residues Cys145, Cys147, Cys182, and His185 each coordinate Zn(2+).

This sequence belongs to the thymidine kinase family. In terms of assembly, homotetramer.

It localises to the cytoplasm. The catalysed reaction is thymidine + ATP = dTMP + ADP + H(+). This is Thymidine kinase from Vibrio vulnificus (strain CMCP6).